A 532-amino-acid chain; its full sequence is Invertase 2 (532 aa).

The N-terminal stretch at 1 to 19 is a signal peptide; it reads MLLQAFLFLLAGFAAKISA. A glycan (N-linked (GlcNAc...) asparagine) is linked at N23. Residues 39–42 and Q60 each bind substrate; that span reads WMND. Residue D42 is part of the active site. The N-linked (GlcNAc...) asparagine; partial glycan is linked to N64. N-linked (GlcNAc...) asparagine glycosylation is present at N97. Position 102-103 (102-103) interacts with substrate; the sequence is FS. N-linked (GlcNAc...) asparagine glycosylation is found at N111 and N118. An N-linked (GlcNAc...) asparagine; partial glycan is attached at N165. Substrate is bound by residues 170–171 and E223; that span reads RD. 2 N-linked (GlcNAc...) asparagine; partial glycosylation sites follow: N266 and N275. W311 is a substrate binding site. N-linked (GlcNAc...) asparagine glycans are attached at residues N356, N369, N384, and N398. N512 is a glycosylation site (N-linked (GlcNAc...) asparagine; partial).

Belongs to the glycosyl hydrolase 32 family. Isoform Secreted is glycosylated. Isoform Intracellular is not glycosylated.

The protein localises to the cytoplasm. It is found in the secreted. It carries out the reaction Hydrolysis of terminal non-reducing beta-D-fructofuranoside residues in beta-D-fructofuranosides.. This Saccharomyces cerevisiae (strain ATCC 204508 / S288c) (Baker's yeast) protein is Invertase 2 (SUC2).